The sequence spans 509 residues: Probable cytochrome P450 513A1 (509 aa).

The chain crosses the membrane as a helical span at residues 2-19; that stretch reads NYLVGLVLIFTIFYFFLQ. C454 contacts heme.

This sequence belongs to the cytochrome P450 family. Heme is required as a cofactor.

The protein resides in the membrane. The chain is Probable cytochrome P450 513A1 (cyp513A1) from Dictyostelium discoideum (Social amoeba).